A 397-amino-acid polypeptide reads, in one-letter code: Probable sugar efflux transporter (397 aa).

A run of 12 helical transmembrane segments spans residues 15–35, 51–71, 80–100, 103–123, 137–157, 169–189, 209–229, 246–266, 277–297, 299–319, 333–353, and 365–385; these read VIVM…PVAL, GLMI…CMLM, LLIS…FAWN, VLLI…SITA, QALG…LPLG, TFTL…RLLP, PMLI…FTAY, KATA…VLFS, LLSS…VSGI, GAIF…SLAM, VATA…ALIG, and IGYV…LMFL.

It belongs to the major facilitator superfamily. SotB (TC 2.A.1.2) family.

It localises to the cell inner membrane. Functionally, involved in the efflux of sugars. The physiological role may be the reduction of the intracellular concentration of toxic sugars or sugar metabolites. In Mannheimia succiniciproducens (strain KCTC 0769BP / MBEL55E), this protein is Probable sugar efflux transporter.